Consider the following 684-residue polypeptide: MTSTAPSDGTGIIDLDPWLEPFREAIKRRFDYVESWIKTVDEVEGGLDKFSKGYEKFGFNVSETGDITYREWAPNAIEAALVGDFNNWDTKANPMTRDNFGVWEIALPAKNGTPVIPHDSKVKITMVTRSGERIYRIPAWIKRVVQDLNVSPIYESVFWNPPKAERYNFQHARPKKPESLRIYEAHVGISSPDTRVATYKEFTANMLPRIKYLGYNAIQLMAIMEHAYYASFGYQVNNFFAASSRYGKPEDLKELVDTAHSMGLVVLLDVVHSHASKNVDDGLNMFDGSDHLYFHSGSKGQHELWDSRLFNYGNHEVLRFLLSNLRFWMEEYGFDGFRFDGVTSMLYTHHGIGTGFSGGYHEYFGPAVDDDGVMYLALANEMLHRLYPDCITVAEDVSGMPALCLPHGLGGVGFDYRLAMAIPDMYIKLLKEKSDNDWDIGNLAFTLTNRRHGEKTIAYAESHDQALVGDKSLMMWLCDKEMYTHMSVLTEFTPVIERGMALHKMIRLVTHALGGEGYLNFEGNEFGHPEWLDFPRAGNNNSFWYARRQLNLTEDHLLRYRFLNEFDRAMQLTESKYGWLHAPQAYISLKHEGDKVLVFERADLLWIFNFHPTESFTDYRVGVEQAGTYRVVLDTDDQAFGGLGRIDQGTRFFTTDMEWNGRRNYLQVYIPTRTALALALEETL.

(1,4-alpha-D-glucosyl)n-binding residues include Trp-88 and Lys-123. The Nucleophile role is filled by Asp-340. Catalysis depends on Glu-395, which acts as the Proton donor.

It belongs to the glycosyl hydrolase 13 family. GlgB subfamily.

The protein resides in the cytoplasm. It carries out the reaction Transfers a segment of a (1-&gt;4)-alpha-D-glucan chain to a primary hydroxy group in a similar glucan chain.. It participates in glycan biosynthesis; glycogen biosynthesis. Glycogen-branching enzyme participates in the glycogen biosynthetic process along with glycogenin and glycogen synthase. Generates alpha-1,6-glucosidic branches from alpha-1,4-linked glucose chains, to increase solubility of the glycogen polymer. This is 1,4-alpha-glucan-branching enzyme (be1) from Emericella nidulans (strain FGSC A4 / ATCC 38163 / CBS 112.46 / NRRL 194 / M139) (Aspergillus nidulans).